Here is a 567-residue protein sequence, read N- to C-terminus: Maltase A2 (567 aa).

Positions 1–23 (MPKWAHLGLAALLLISTTQEGTA) are cleaved as a signal peptide. N30, N124, and N198 each carry an N-linked (GlcNAc...) asparagine glycan. D226 functions as the Nucleophile in the catalytic mechanism. E298 (proton donor) is an active-site residue. N312 carries an N-linked (GlcNAc...) asparagine glycan.

This sequence belongs to the glycosyl hydrolase 13 family.

The catalysed reaction is Hydrolysis of terminal, non-reducing (1-&gt;4)-linked alpha-D-glucose residues with release of alpha-D-glucose.. The chain is Maltase A2 (Mal-A2) from Drosophila melanogaster (Fruit fly).